Reading from the N-terminus, the 171-residue chain is 3-hydroxydecanoyl-[acyl-carrier-protein] dehydratase (171 aa).

The active site involves His70.

The protein belongs to the thioester dehydratase family. FabA subfamily. In terms of assembly, homodimer.

The protein resides in the cytoplasm. The catalysed reaction is a (3R)-hydroxyacyl-[ACP] = a (2E)-enoyl-[ACP] + H2O. It carries out the reaction (3R)-hydroxydecanoyl-[ACP] = (2E)-decenoyl-[ACP] + H2O. The enzyme catalyses (2E)-decenoyl-[ACP] = (3Z)-decenoyl-[ACP]. It participates in lipid metabolism; fatty acid biosynthesis. Functionally, necessary for the introduction of cis unsaturation into fatty acids. Catalyzes the dehydration of (3R)-3-hydroxydecanoyl-ACP to E-(2)-decenoyl-ACP and then its isomerization to Z-(3)-decenoyl-ACP. Can catalyze the dehydratase reaction for beta-hydroxyacyl-ACPs with saturated chain lengths up to 16:0, being most active on intermediate chain length. The sequence is that of 3-hydroxydecanoyl-[acyl-carrier-protein] dehydratase from Pseudomonas fluorescens (strain SBW25).